A 158-amino-acid polypeptide reads, in one-letter code: MVFDPRTLDNPKEISAYRDQRYQGTVRDQETALRTSCTLYVGNLSYYTKEDQVYELFGRAGDVRRVIMGLDRFKKTPCGFCFVEYYTREDAELALQNISNTRMDDRVIRADWDAGFIEGRQYGRGKHGGQVRDEYRKDYDPERGGYNRAIAQKGGDRQ.

MRNA is bound by residues Tyr-17, Tyr-40, 109–113, 120–124, and 130–131; these read RADWD, RQYGR, and QV. The RRM domain occupies 37-115; it reads CTLYVGNLSY…RVIRADWDAG (79 aa). Residues 123–158 form a disordered region; the sequence is GRGKHGGQVRDEYRKDYDPERGGYNRAIAQKGGDRQ. Basic and acidic residues predominate over residues 130–145; sequence QVRDEYRKDYDPERGG.

The protein belongs to the RRM NCBP2 family. Component of the nuclear cap-binding complex (CBC), a heterodimer composed of ncbp-1 and ncbp-2 that interacts with m7GpppG-capped RNA.

It is found in the nucleus. Its function is as follows. Component of the cap-binding complex (CBC), which binds co-transcriptionally to the 5' cap of pre-mRNAs and is involved in various processes such as pre-mRNA splicing and RNA-mediated gene silencing (RNAi). The CBC complex is involved in miRNA-mediated RNA interference and is required for primary microRNAs (miRNAs) processing. In the CBC complex, ncbp-2 recognizes and binds capped RNAs (m7GpppG-capped RNA) but requires ncbp-1 to stabilize the movement of its N-terminal loop and lock the CBC into a high affinity cap-binding state with the cap structure. The polypeptide is Nuclear cap-binding protein subunit 2 (ncbp-2) (Caenorhabditis elegans).